Reading from the N-terminus, the 436-residue chain is Eukaryotic peptide chain release factor subunit 1 (436 aa).

The protein belongs to the eukaryotic release factor 1 family. As to quaternary structure, heterodimer of two subunits, one of which binds GTP.

The protein localises to the cytoplasm. Directs the termination of nascent peptide synthesis (translation) in response to the termination codon UGA. In L.striatus UAA and UAG codes for glutamine. The protein is Eukaryotic peptide chain release factor subunit 1 (eRF1) of Loxodes striatus.